A 120-amino-acid chain; its full sequence is U13-lycotoxin-Ls1f (120 aa).

The signal sequence occupies residues 1–19 (MKILFVLISILYAVYRFSS). The propeptide occupies 20–54 (EEDVDSAYLANELEPVEDINSEQYAALEPKEEQER). Cystine bridges form between Cys56–Cys70, Cys63–Cys76, Cys69–Cys87, and Cys78–Cys85. Positions 56–95 (CAGMGQDCKDDCDCCLNIATCNCWFGRYFCSCTFGDYQTC) constitute an Agouti domain.

The protein belongs to the neurotoxin 05 (agouti) family. In terms of processing, contains 6 disulfide bonds. As to expression, expressed by the venom gland.

The protein localises to the secreted. The sequence is that of U13-lycotoxin-Ls1f from Lycosa singoriensis (Wolf spider).